Reading from the N-terminus, the 88-residue chain is DNA-directed RNA polymerase subunit omega (88 aa).

The protein belongs to the RNA polymerase subunit omega family. In terms of assembly, the RNAP catalytic core consists of 2 alpha, 1 beta, 1 beta' and 1 omega subunit. When a sigma factor is associated with the core the holoenzyme is formed, which can initiate transcription.

It carries out the reaction RNA(n) + a ribonucleoside 5'-triphosphate = RNA(n+1) + diphosphate. Promotes RNA polymerase assembly. Latches the N- and C-terminal regions of the beta' subunit thereby facilitating its interaction with the beta and alpha subunits. This is DNA-directed RNA polymerase subunit omega from Yersinia pestis (strain Pestoides F).